The following is a 96-amino-acid chain: Large ribosomal subunit protein eL14 (96 aa).

Belongs to the eukaryotic ribosomal protein eL14 family.

This chain is Large ribosomal subunit protein eL14, found in Saccharolobus islandicus (strain Y.N.15.51 / Yellowstone #2) (Sulfolobus islandicus).